The following is a 370-amino-acid chain: 3-isopropylmalate dehydrogenase (370 aa).

77–90 (GPKWDAVPYDARPE) is an NAD(+) binding site. Substrate contacts are provided by arginine 97, arginine 107, arginine 135, and aspartate 226. Mg(2+)-binding residues include aspartate 226, aspartate 250, and aspartate 254. 290 to 302 (GSAPDIAGKGLAN) provides a ligand contact to NAD(+).

This sequence belongs to the isocitrate and isopropylmalate dehydrogenases family. LeuB type 1 subfamily. Homodimer. Requires Mg(2+) as cofactor. Mn(2+) serves as cofactor.

It localises to the cytoplasm. It carries out the reaction (2R,3S)-3-isopropylmalate + NAD(+) = 4-methyl-2-oxopentanoate + CO2 + NADH. It functions in the pathway amino-acid biosynthesis; L-leucine biosynthesis; L-leucine from 3-methyl-2-oxobutanoate: step 3/4. Functionally, catalyzes the oxidation of 3-carboxy-2-hydroxy-4-methylpentanoate (3-isopropylmalate) to 3-carboxy-4-methyl-2-oxopentanoate. The product decarboxylates to 4-methyl-2 oxopentanoate. The protein is 3-isopropylmalate dehydrogenase of Rhodopseudomonas palustris (strain HaA2).